Here is a 370-residue protein sequence, read N- to C-terminus: Germination protease (370 aa).

Residues 1–15 constitute a propeptide that is removed on maturation; it reads MEKELDLSQYSVRTD.

The protein belongs to the peptidase A25 family. In terms of assembly, homotetramer. Post-translationally, autoproteolytically processed. The inactive tetrameric zymogen termed p46 autoprocesses to a smaller form termed p41, which is active only during spore germination.

The enzyme catalyses Endopeptidase action with P4 Glu or Asp, P1 preferably Glu &gt; Asp, P1' hydrophobic and P2' Ala.. Functionally, initiates the rapid degradation of small, acid-soluble proteins during spore germination. This Priestia megaterium (strain ATCC 12872 / QMB1551) (Bacillus megaterium) protein is Germination protease (gpr).